We begin with the raw amino-acid sequence, 582 residues long: Glutamine--tRNA ligase (582 aa).

A 'HIGH' region motif is present at residues 50–60; that stretch reads PEPNGYLHIGH. ATP-binding positions include 51–53 and 57–63; these read EPN and HIGHAKS. L-glutamine contacts are provided by Asp83 and Tyr235. Residues Thr254 and 289-290 each bind ATP; that span reads RL. A 'KMSKS' region motif is present at residues 296 to 300; it reads ITSKR.

The protein belongs to the class-I aminoacyl-tRNA synthetase family. Monomer.

The protein resides in the cytoplasm. The catalysed reaction is tRNA(Gln) + L-glutamine + ATP = L-glutaminyl-tRNA(Gln) + AMP + diphosphate. The chain is Glutamine--tRNA ligase from Cupriavidus metallidurans (strain ATCC 43123 / DSM 2839 / NBRC 102507 / CH34) (Ralstonia metallidurans).